The following is a 725-amino-acid chain: Beta-adducin (725 aa).

The segment at 1–22 (MSEDTVPEAASPPPSQGQHYFD) is disordered. A phosphoserine mark is found at Ser-11 and Ser-25. At Thr-55 the chain carries Phosphothreonine. 2 positions are modified to phosphoserine: Ser-60 and Ser-344. The segment at 425 to 444 (KQQKEKTRWLNTPNTYLRVN) is interaction with calmodulin. Positions 525-725 (AEKSRSPSTE…KSKKKEKVES (201 aa)) are disordered. Phosphoserine is present on residues Ser-530 and Ser-532. Thr-533 is subject to Phosphothreonine. Residue Ser-535 is modified to Phosphoserine. Position 561 is a phosphothreonine (Thr-561). Positions 566–589 (EEYKKEVERKKLEQEQEGEKDIAT) are enriched in basic and acidic residues. Residues Ser-594, Ser-598, Ser-602, and Ser-606 each carry the phosphoserine modification. Positions 596-621 (VKSTPASPVQSPSKAGTKSPAVSPSK) are enriched in polar residues. Thr-612 carries the phosphothreonine modification. Phosphoserine is present on residues Ser-614, Ser-618, and Ser-620. The span at 622–631 (TSEDTKKTEV) shows a compositional bias: basic and acidic residues. Thr-674 is modified (phosphothreonine). A phosphoserine mark is found at Ser-678, Ser-685, Ser-688, Ser-692, Ser-696, Ser-698, Ser-700, Ser-702, and Ser-712. A compositionally biased stretch (low complexity) spans 687–700 (TSGPLSPEGSPSKS). Positions 701 to 725 (PSKKKKKFRTPSFLKKSKKKEKVES) are enriched in basic residues. The interval 703 to 720 (KKKKKFRTPSFLKKSKKK) is interaction with calmodulin.

This sequence belongs to the aldolase class II family. Adducin subfamily. In terms of assembly, found in a complex with ADD2, DMTN and SLC2A1. Interacts with SLC2A1. Heterodimer of an alpha and a beta subunit.

Its subcellular location is the cytoplasm. The protein localises to the cytoskeleton. The protein resides in the cell membrane. Membrane-cytoskeleton-associated protein that promotes the assembly of the spectrin-actin network. Binds to the erythrocyte membrane receptor SLC2A1/GLUT1 and may therefore provide a link between the spectrin cytoskeleton to the plasma membrane. Binds to calmodulin. Calmodulin binds preferentially to the beta subunit. This Mus musculus (Mouse) protein is Beta-adducin (Add2).